Reading from the N-terminus, the 238-residue chain is 2-C-methyl-D-erythritol 4-phosphate cytidylyltransferase (238 aa).

This sequence belongs to the IspD/TarI cytidylyltransferase family. IspD subfamily.

It carries out the reaction 2-C-methyl-D-erythritol 4-phosphate + CTP + H(+) = 4-CDP-2-C-methyl-D-erythritol + diphosphate. Its pathway is isoprenoid biosynthesis; isopentenyl diphosphate biosynthesis via DXP pathway; isopentenyl diphosphate from 1-deoxy-D-xylulose 5-phosphate: step 2/6. In terms of biological role, catalyzes the formation of 4-diphosphocytidyl-2-C-methyl-D-erythritol from CTP and 2-C-methyl-D-erythritol 4-phosphate (MEP). The chain is 2-C-methyl-D-erythritol 4-phosphate cytidylyltransferase from Shewanella amazonensis (strain ATCC BAA-1098 / SB2B).